The sequence spans 483 residues: Aspartyl/glutamyl-tRNA(Asn/Gln) amidotransferase subunit B (483 aa).

This sequence belongs to the GatB/GatE family. GatB subfamily. As to quaternary structure, heterotrimer of A, B and C subunits.

The enzyme catalyses L-glutamyl-tRNA(Gln) + L-glutamine + ATP + H2O = L-glutaminyl-tRNA(Gln) + L-glutamate + ADP + phosphate + H(+). It carries out the reaction L-aspartyl-tRNA(Asn) + L-glutamine + ATP + H2O = L-asparaginyl-tRNA(Asn) + L-glutamate + ADP + phosphate + 2 H(+). Functionally, allows the formation of correctly charged Asn-tRNA(Asn) or Gln-tRNA(Gln) through the transamidation of misacylated Asp-tRNA(Asn) or Glu-tRNA(Gln) in organisms which lack either or both of asparaginyl-tRNA or glutaminyl-tRNA synthetases. The reaction takes place in the presence of glutamine and ATP through an activated phospho-Asp-tRNA(Asn) or phospho-Glu-tRNA(Gln). The polypeptide is Aspartyl/glutamyl-tRNA(Asn/Gln) amidotransferase subunit B (Brachyspira hyodysenteriae (strain ATCC 49526 / WA1)).